Consider the following 93-residue polypeptide: Large ribosomal subunit protein uL23cz/uL23cy (93 aa).

This sequence belongs to the universal ribosomal protein uL23 family. As to quaternary structure, part of the 50S ribosomal subunit.

The protein localises to the plastid. Its subcellular location is the chloroplast. Functionally, binds to 23S rRNA. The sequence is that of Large ribosomal subunit protein uL23cz/uL23cy (rpl23-A) from Phaseolus angularis (Azuki bean).